The following is a 117-amino-acid chain: NADH-ubiquinone oxidoreductase chain 3 (117 aa).

The next 3 helical transmembrane spans lie at 1-21 (MLML…VMML), 57-77 (FFLI…LLPM), and 86-106 (LMNW…GLYH).

It belongs to the complex I subunit 3 family.

The protein localises to the mitochondrion membrane. The enzyme catalyses a ubiquinone + NADH + 5 H(+)(in) = a ubiquinol + NAD(+) + 4 H(+)(out). Functionally, core subunit of the mitochondrial membrane respiratory chain NADH dehydrogenase (Complex I) that is believed to belong to the minimal assembly required for catalysis. Complex I functions in the transfer of electrons from NADH to the respiratory chain. The immediate electron acceptor for the enzyme is believed to be ubiquinone. The protein is NADH-ubiquinone oxidoreductase chain 3 (ND3) of Anopheles quadrimaculatus (Common malaria mosquito).